Here is a 212-residue protein sequence, read N- to C-terminus: 3-demethoxyubiquinol 3-hydroxylase (212 aa).

E61, E91, H94, E143, E175, and H178 together coordinate Fe cation.

It belongs to the COQ7 family. Requires Fe cation as cofactor.

The protein resides in the cell membrane. The enzyme catalyses a 5-methoxy-2-methyl-3-(all-trans-polyprenyl)benzene-1,4-diol + AH2 + O2 = a 3-demethylubiquinol + A + H2O. Its pathway is cofactor biosynthesis; ubiquinone biosynthesis. Its function is as follows. Catalyzes the hydroxylation of 2-nonaprenyl-3-methyl-6-methoxy-1,4-benzoquinol during ubiquinone biosynthesis. In Methylibium petroleiphilum (strain ATCC BAA-1232 / LMG 22953 / PM1), this protein is 3-demethoxyubiquinol 3-hydroxylase.